Consider the following 844-residue polypeptide: DNA mismatch repair protein MutS (844 aa).

Residue 602–609 participates in ATP binding; that stretch reads GPNMSGKS.

This sequence belongs to the DNA mismatch repair MutS family.

Functionally, this protein is involved in the repair of mismatches in DNA. It is possible that it carries out the mismatch recognition step. This protein has a weak ATPase activity. The protein is DNA mismatch repair protein MutS of Streptococcus pneumoniae (strain ATCC 700669 / Spain 23F-1).